Reading from the N-terminus, the 355-residue chain is UDP-N-acetylglucosamine--N-acetylmuramyl-(pentapeptide) pyrophosphoryl-undecaprenol N-acetylglucosamine transferase (355 aa).

Residues 14 to 16 (TGG), Asn-126, Arg-162, Ser-190, Ile-243, 262 to 267 (ALTVSE), and Gln-287 each bind UDP-N-acetyl-alpha-D-glucosamine.

It belongs to the glycosyltransferase 28 family. MurG subfamily.

It localises to the cell inner membrane. The catalysed reaction is di-trans,octa-cis-undecaprenyl diphospho-N-acetyl-alpha-D-muramoyl-L-alanyl-D-glutamyl-meso-2,6-diaminopimeloyl-D-alanyl-D-alanine + UDP-N-acetyl-alpha-D-glucosamine = di-trans,octa-cis-undecaprenyl diphospho-[N-acetyl-alpha-D-glucosaminyl-(1-&gt;4)]-N-acetyl-alpha-D-muramoyl-L-alanyl-D-glutamyl-meso-2,6-diaminopimeloyl-D-alanyl-D-alanine + UDP + H(+). Its pathway is cell wall biogenesis; peptidoglycan biosynthesis. Cell wall formation. Catalyzes the transfer of a GlcNAc subunit on undecaprenyl-pyrophosphoryl-MurNAc-pentapeptide (lipid intermediate I) to form undecaprenyl-pyrophosphoryl-MurNAc-(pentapeptide)GlcNAc (lipid intermediate II). The protein is UDP-N-acetylglucosamine--N-acetylmuramyl-(pentapeptide) pyrophosphoryl-undecaprenol N-acetylglucosamine transferase of Vibrio campbellii (strain ATCC BAA-1116).